We begin with the raw amino-acid sequence, 25 residues long: Panurgine R (25 aa).

2 disulfide bridges follow: Cys8–Cys23 and Cys11–Cys19.

The protein localises to the target cell membrane. It localises to the secreted. Its function is as follows. Antimicrobial peptide active against Gram-positive bacteria M.luteus (MIC=0.8 uM) and B.subtilis (MIC=1.5 uM). Less active against Gram-negative bacteria E.coli (MIC=32.5 uM) and yeast C.albicans (MIC=18.7 uM). Not active against S.aureus and P.aeruginosa. Has no hemolytic activity against human erythrocytes. Probably acts by disrupting membranes of target cells. The chain is Panurgine R from Panurgus calcaratus (Solitary bee).